We begin with the raw amino-acid sequence, 273 residues long: Tryptophan synthase alpha chain (273 aa).

Catalysis depends on proton acceptor residues Glu-49 and Asp-60.

It belongs to the TrpA family. As to quaternary structure, tetramer of two alpha and two beta chains.

It catalyses the reaction (1S,2R)-1-C-(indol-3-yl)glycerol 3-phosphate + L-serine = D-glyceraldehyde 3-phosphate + L-tryptophan + H2O. It functions in the pathway amino-acid biosynthesis; L-tryptophan biosynthesis; L-tryptophan from chorismate: step 5/5. In terms of biological role, the alpha subunit is responsible for the aldol cleavage of indoleglycerol phosphate to indole and glyceraldehyde 3-phosphate. The chain is Tryptophan synthase alpha chain from Halorhodospira halophila (strain DSM 244 / SL1) (Ectothiorhodospira halophila (strain DSM 244 / SL1)).